Consider the following 559-residue polypeptide: Proline--tRNA ligase (559 aa).

It belongs to the class-II aminoacyl-tRNA synthetase family. ProS type 1 subfamily. As to quaternary structure, homodimer.

Its subcellular location is the cytoplasm. It catalyses the reaction tRNA(Pro) + L-proline + ATP = L-prolyl-tRNA(Pro) + AMP + diphosphate. Catalyzes the attachment of proline to tRNA(Pro) in a two-step reaction: proline is first activated by ATP to form Pro-AMP and then transferred to the acceptor end of tRNA(Pro). As ProRS can inadvertently accommodate and process non-cognate amino acids such as alanine and cysteine, to avoid such errors it has two additional distinct editing activities against alanine. One activity is designated as 'pretransfer' editing and involves the tRNA(Pro)-independent hydrolysis of activated Ala-AMP. The other activity is designated 'posttransfer' editing and involves deacylation of mischarged Ala-tRNA(Pro). The misacylated Cys-tRNA(Pro) is not edited by ProRS. This is Proline--tRNA ligase from Ruthia magnifica subsp. Calyptogena magnifica.